A 563-amino-acid chain; its full sequence is Efflux pump FUS6 (563 aa).

The segment at 1-30 (MPQPDKMAAVNNAMPQPAPEKSLSSDPQPE) is disordered. The next 5 helical transmembrane spans lie at 39–59 (WLIFVAIALTTFLAALDTSII), 75–95 (LYVWIIDAYLLASTATIPIFA), 105–125 (SLTLIAVCIFTLGSGLCGGAH), 138–158 (GIGGGGILTMSEIVVCDMVSI), and 167–187 (IIGGVWAIAAVVAPVMGGAFA). Asparagine 189 carries N-linked (GlcNAc...) asparagine glycosylation. The next 3 helical transmembrane spans lie at 194–214 (WIFYINLPIAGVSLVALGLFL), 233–253 (WGGSVLLIGSVTSIVLALSWG), and 261–281 (GWQTIVPLVIGLLALVAFFAY). Residue asparagine 299 is glycosylated (N-linked (GlcNAc...) asparagine). 6 helical membrane passes run 305-325 (LLVISFIHSLLLYWVCYFLPV), 340-360 (VMLFPIACTSAPAGVAAGITI), 368-388 (VWHFTGFVLMSIACGLFTLLD), 401-421 (ILFGVGTGTVFTSTLPPILAS), 433-453 (AWTFIRNFGSIWGVAIPAAVF), and 509-529 (KVVWQVSLAFCLLGFILCFFV). Asparagine 553 carries an N-linked (GlcNAc...) asparagine glycan.

It belongs to the major facilitator superfamily. TCR/Tet family.

It is found in the membrane. In terms of biological role, efflux pump; part of the gene cluster that mediates the biosynthesis of the mycotoxin fusarin C. Within the cluster, FUS1, FUS2, FUS8 and FUS9 are sufficient for fusarin production. The other FUS cluster members are not essential for fusarin C biosynthesis. The protein is Efflux pump FUS6 of Gibberella moniliformis (strain M3125 / FGSC 7600) (Maize ear and stalk rot fungus).